The sequence spans 539 residues: Cytochrome c oxidase subunit 1 homolog, bacteroid (539 aa).

Transmembrane regions (helical) follow at residues 4–24, 28–48, and 75–95; these read TVEM…AGLA, LFGA…LVLM, and GVVA…VVAL. His117 provides a ligand contact to heme b. A run of 8 helical transmembrane segments spans residues 118 to 138, 154 to 174, 187 to 207, 214 to 234, 265 to 285, 298 to 318, 330 to 350, and 368 to 388; these read TSAV…FYVV, FVFW…LLGI, VDLW…GTIM, IYVA…LHVV, GHNA…YYFI, LSII…PHHL, LGMV…INGL, and MMVM…MMSI. Cu cation-binding residues include His266, His316, and His317. Heme b contacts are provided by His404 and His406. The next 4 helical transmembrane spans lie at 405-425, 443-463, 475-495, and 499-519; these read VHSG…YYLV, HFWL…VAGI, QGFL…YYVM, and GGAL…MTIL.

Belongs to the heme-copper respiratory oxidase family. Cu(2+) is required as a cofactor. The cofactor is heme b.

The protein localises to the cell membrane. It catalyses the reaction 4 Fe(II)-[cytochrome c] + O2 + 8 H(+)(in) = 4 Fe(III)-[cytochrome c] + 2 H2O + 4 H(+)(out). The protein operates within energy metabolism; oxidative phosphorylation. Its function is as follows. Cytochrome c oxidase is the component of the respiratory chain that catalyzes the reduction of oxygen to water. Subunits 1-3 form the functional core of the enzyme complex. Co I is the catalytic subunit of the enzyme. Electrons originating in cytochrome c or a quinol are transferred to the bimetallic center formed by a high-spin heme and copper B. The chain is Cytochrome c oxidase subunit 1 homolog, bacteroid (fixN) from Rhizobium meliloti (strain 1021) (Ensifer meliloti).